Consider the following 121-residue polypeptide: UPF0344 protein BC_1150 (121 aa).

Transmembrane regions (helical) follow at residues 6–26 (ITAW…YSAG), 38–58 (LMYI…VKTA), 65–85 (WYGL…MVLV), and 92–112 (PTGA…YLGL).

It belongs to the UPF0344 family.

Its subcellular location is the cell membrane. The protein is UPF0344 protein BC_1150 of Bacillus cereus (strain ATCC 14579 / DSM 31 / CCUG 7414 / JCM 2152 / NBRC 15305 / NCIMB 9373 / NCTC 2599 / NRRL B-3711).